We begin with the raw amino-acid sequence, 155 residues long: Probable Brix domain-containing ribosomal biogenesis protein (155 aa).

Positions 1 to 155 (MLITSSRKPS…KNYRKMVMSE (155 aa)) constitute a Brix domain.

In terms of biological role, probably involved in the biogenesis of the ribosome. The protein is Probable Brix domain-containing ribosomal biogenesis protein of Methanococcoides burtonii (strain DSM 6242 / NBRC 107633 / OCM 468 / ACE-M).